The following is a 208-amino-acid chain: Uracil phosphoribosyltransferase (208 aa).

Residues arginine 78, arginine 103, and 130 to 138 each bind 5-phospho-alpha-D-ribose 1-diphosphate; that span reads DPMLATGGS. Uracil is bound by residues isoleucine 193 and 198 to 200; that span reads GDA. Aspartate 199 serves as a coordination point for 5-phospho-alpha-D-ribose 1-diphosphate.

It belongs to the UPRTase family. It depends on Mg(2+) as a cofactor.

The enzyme catalyses UMP + diphosphate = 5-phospho-alpha-D-ribose 1-diphosphate + uracil. It participates in pyrimidine metabolism; UMP biosynthesis via salvage pathway; UMP from uracil: step 1/1. Allosterically activated by GTP. Functionally, catalyzes the conversion of uracil and 5-phospho-alpha-D-ribose 1-diphosphate (PRPP) to UMP and diphosphate. The sequence is that of Uracil phosphoribosyltransferase from Thermus thermophilus (strain ATCC 27634 / DSM 579 / HB8).